Consider the following 66-residue polypeptide: Large ribosomal subunit protein bL33c (66 aa).

The protein belongs to the bacterial ribosomal protein bL33 family.

It localises to the plastid. The protein localises to the chloroplast. This Coffea arabica (Arabian coffee) protein is Large ribosomal subunit protein bL33c.